A 202-amino-acid polypeptide reads, in one-letter code: Imidazoleglycerol-phosphate dehydratase (202 aa).

This sequence belongs to the imidazoleglycerol-phosphate dehydratase family.

The protein resides in the cytoplasm. It catalyses the reaction D-erythro-1-(imidazol-4-yl)glycerol 3-phosphate = 3-(imidazol-4-yl)-2-oxopropyl phosphate + H2O. It participates in amino-acid biosynthesis; L-histidine biosynthesis; L-histidine from 5-phospho-alpha-D-ribose 1-diphosphate: step 6/9. In Brucella suis (strain ATCC 23445 / NCTC 10510), this protein is Imidazoleglycerol-phosphate dehydratase.